Consider the following 414-residue polypeptide: Dual-specificity RNA methyltransferase RlmN (414 aa).

The active-site Proton acceptor is Glu127. The 248-residue stretch at 133-380 (GEGRGTLCVS…SPIRMPRGRD (248 aa)) folds into the Radical SAM core domain. Cys140 and Cys385 are disulfide-bonded. Cys147, Cys151, and Cys154 together coordinate [4Fe-4S] cluster. S-adenosyl-L-methionine contacts are provided by residues 211–212 (GE), Ser243, 265–267 (SLH), and Asn342. Cys385 acts as the S-methylcysteine intermediate in catalysis.

It belongs to the radical SAM superfamily. RlmN family. It depends on [4Fe-4S] cluster as a cofactor.

Its subcellular location is the cytoplasm. It carries out the reaction adenosine(2503) in 23S rRNA + 2 reduced [2Fe-2S]-[ferredoxin] + 2 S-adenosyl-L-methionine = 2-methyladenosine(2503) in 23S rRNA + 5'-deoxyadenosine + L-methionine + 2 oxidized [2Fe-2S]-[ferredoxin] + S-adenosyl-L-homocysteine. The catalysed reaction is adenosine(37) in tRNA + 2 reduced [2Fe-2S]-[ferredoxin] + 2 S-adenosyl-L-methionine = 2-methyladenosine(37) in tRNA + 5'-deoxyadenosine + L-methionine + 2 oxidized [2Fe-2S]-[ferredoxin] + S-adenosyl-L-homocysteine. Specifically methylates position 2 of adenine 2503 in 23S rRNA and position 2 of adenine 37 in tRNAs. m2A2503 modification seems to play a crucial role in the proofreading step occurring at the peptidyl transferase center and thus would serve to optimize ribosomal fidelity. In Bartonella bacilliformis (strain ATCC 35685 / KC583 / Herrer 020/F12,63), this protein is Dual-specificity RNA methyltransferase RlmN.